The following is a 68-amino-acid chain: MKRQKRNKDDRAYNRGYNAGLDGKSREDCPFGTLQARTNWMGGWREGRTDFAHGMLGVASIQNLKNIG.

This sequence belongs to the ribosome modulation factor family.

It is found in the cytoplasm. In terms of biological role, during stationary phase, converts 70S ribosomes to an inactive dimeric form (100S ribosomes). The chain is Ribosome modulation factor from Alcanivorax borkumensis (strain ATCC 700651 / DSM 11573 / NCIMB 13689 / SK2).